A 225-amino-acid polypeptide reads, in one-letter code: UPF0173 metal-dependent hydrolase Aflv_0488 (225 aa).

This sequence belongs to the UPF0173 family.

This is UPF0173 metal-dependent hydrolase Aflv_0488 from Anoxybacillus flavithermus (strain DSM 21510 / WK1).